The following is a 358-amino-acid chain: Type II restriction enzyme HpaII (358 aa).

Homodimer.

It catalyses the reaction Endonucleolytic cleavage of DNA to give specific double-stranded fragments with terminal 5'-phosphates.. Its function is as follows. An E and P subtype restriction enzyme that recognizes the double-stranded sequence 5'-CCGG-3' and cleaves after C-1. The protein is Type II restriction enzyme HpaII of Haemophilus parainfluenzae.